A 292-amino-acid chain; its full sequence is Glycine--tRNA ligase alpha subunit (292 aa).

It belongs to the class-II aminoacyl-tRNA synthetase family. As to quaternary structure, tetramer of two alpha and two beta subunits.

It localises to the cytoplasm. The enzyme catalyses tRNA(Gly) + glycine + ATP = glycyl-tRNA(Gly) + AMP + diphosphate. This Pelobacter propionicus (strain DSM 2379 / NBRC 103807 / OttBd1) protein is Glycine--tRNA ligase alpha subunit.